The following is a 188-amino-acid chain: Protease-associated domain-containing protein 1 (188 aa).

Residues 1-21 (MVPGAAGWCCLVLWLPACVAA) form the signal peptide. One can recognise a PA domain in the interval 83 to 163 (IQDQIALVER…RSLEQHGLPW (81 aa)). Asn171 carries N-linked (GlcNAc...) asparagine glycosylation.

N-glycosylated; required for efficient secretion. In terms of tissue distribution, highly expressed in skeletal muscle, heart and liver. Expressed at intermediate level in kidney.

It localises to the secreted. Its function is as follows. Plays a role in the modulation of physical activity and adiposity. This chain is Protease-associated domain-containing protein 1, found in Homo sapiens (Human).